Consider the following 196-residue polypeptide: Zinc finger C2H2 protein ECU03_0940 (196 aa).

2 consecutive C2H2-type zinc fingers follow at residues Y130–H155 and Y166–H191.

This Encephalitozoon cuniculi (strain GB-M1) (Microsporidian parasite) protein is Zinc finger C2H2 protein ECU03_0940.